Reading from the N-terminus, the 425-residue chain is CinA-like protein (425 aa).

It belongs to the CinA family.

In Shewanella sp. (strain MR-4), this protein is CinA-like protein.